Reading from the N-terminus, the 245-residue chain is Probable phosphatase YcdX (245 aa).

Residues His-7, His-9, His-15, His-40, Glu-73, His-101, His-131, Asp-192, and His-194 each contribute to the Zn(2+) site.

It belongs to the PHP family. Homotrimer. Zn(2+) serves as cofactor.

This is Probable phosphatase YcdX from Escherichia coli O17:K52:H18 (strain UMN026 / ExPEC).